The chain runs to 645 residues: MFYAQFVLAKKGPLAKVWLAAHWEKKLTKAQIFETDVPQAIEEVIRPKVKMALRTVGHLLLGIVRIYSKKTRYLLADTNEAYQKMKINFRNGFSFEVDIPENAEIEEDFSNFIDKYNITVPEFHDADYNEQLIMANVSRREDITMKETVNFNVEFNIDADFDGFGDEGESWQLDHLYGSVEPLSLRPTPQPESLMEVERDRDVAANGTEISRIDADSVIFSEGPTRPNLIFDNQEGGNFMPEMNLKVENQTLENDGGVGPADMFSSMIHPVREHAVADVQNDDGMDFDYQPFEPENVEPSRPQSPESFALEPLDVEHMEGRKKRQRKARKLIVDAETMISNDAFREQQEDFSDTMRVVEMAPPTRKMFNLCVSGDLQHLSREPGCKMFNRELLQRYRRCLVTREFDLNYTMQELSDSSSFTPSMEAQAEPWEDLNLNEDIQEDIQAQGPAVDEFFNDVRMDDDDDRQPAQEMDFGDNFDFPQEVEHQECAPIPIQSGFAGENKENEDAEDWSDPFGSSNSSRRGQLEAYGFGNTSTYKEDDGKWAKRAKHILKKVSADIETSGQADFSSVTATAKNRKQAAEQFYSLLTLAKSQAISVDQSEPYGEIVIRPGANFKEACPLSSPKPMGLGNTMENSTMRTPMRPV.

Disordered regions lie at residues 292–311 (FEPE…FALE), 495–527 (QSGF…GQLE), and 619–645 (CPLS…MRPV).

This sequence belongs to the rad21 family. In terms of assembly, component of the cohesin complex, composed of the smc-1 and smc-3 heterodimer attached via their hinge domain, scc-1 which links them, and scc-3. Interacts with smc-1, smc-3, scc-3 and tim-1.

Its subcellular location is the nucleus. It localises to the chromosome. It is found in the cytoplasm. In terms of biological role, cleavable component of the cohesin complex involved in chromosome cohesion during cell cycle. The cohesin complex is required for the cohesion of sister chromatids after DNA replication. The cohesin complex apparently forms a large proteinaceous ring within which sister chromatids can be trapped. At metaphase-anaphase transition, this protein is cleaved and dissociates from chromatin, allowing sister chromatids to segregate. The polypeptide is Sister chromatid cohesion protein 1 (Caenorhabditis elegans).